We begin with the raw amino-acid sequence, 496 residues long: L-arabinose isomerase (496 aa).

Positions 306, 331, 348, and 447 each coordinate Mn(2+).

It belongs to the arabinose isomerase family. Homotetramer. The cofactor is Mn(2+).

It carries out the reaction beta-L-arabinopyranose = L-ribulose. Its pathway is carbohydrate degradation; L-arabinose degradation via L-ribulose; D-xylulose 5-phosphate from L-arabinose (bacterial route): step 1/3. With respect to regulation, inhibited by copper. Catalyzes the conversion of L-arabinose to L-ribulose. In vitro, converts D-galactose into D-tagatose. In Geobacillus stearothermophilus (Bacillus stearothermophilus), this protein is L-arabinose isomerase (araA).